We begin with the raw amino-acid sequence, 131 residues long: Global transcriptional regulator Spx (131 aa).

Cys10 and Cys13 form a disulfide bridge.

It belongs to the ArsC family. Spx subfamily. In terms of assembly, interacts with the C-terminal domain of the alpha subunit of the RNAP.

It localises to the cytoplasm. Functionally, global transcriptional regulator that plays a key role in stress response and exerts either positive or negative regulation of genes. Acts by interacting with the C-terminal domain of the alpha subunit of the RNA polymerase (RNAP). This interaction can enhance binding of RNAP to the promoter region of target genes and stimulate their transcription, or block interaction of RNAP with activator. The chain is Global transcriptional regulator Spx from Staphylococcus saprophyticus subsp. saprophyticus (strain ATCC 15305 / DSM 20229 / NCIMB 8711 / NCTC 7292 / S-41).